We begin with the raw amino-acid sequence, 95 residues long: Small ribosomal subunit protein uS19 (95 aa).

This sequence belongs to the universal ribosomal protein uS19 family.

Protein S19 forms a complex with S13 that binds strongly to the 16S ribosomal RNA. The chain is Small ribosomal subunit protein uS19 from Roseiflexus castenholzii (strain DSM 13941 / HLO8).